A 130-amino-acid polypeptide reads, in one-letter code: Small ribosomal subunit protein uS8 (130 aa).

Belongs to the universal ribosomal protein uS8 family. As to quaternary structure, part of the 30S ribosomal subunit. Contacts proteins S5 and S12.

One of the primary rRNA binding proteins, it binds directly to 16S rRNA central domain where it helps coordinate assembly of the platform of the 30S subunit. The polypeptide is Small ribosomal subunit protein uS8 (Pectobacterium carotovorum subsp. carotovorum (strain PC1)).